Here is a 119-residue protein sequence, read N- to C-terminus: NLYQFKNMIQCTVPNRSWWHFANYGCYCGRGGSGTPVDDLDRCCQIHDNCYGEAEKISGCWPYIKTYTYESCQGTLTSCGANNKCAASVCDCDRVAANCFARATYNDKNYNIDFNARCQ.

7 cysteine pairs are disulfide-bonded: cysteine 11–cysteine 72, cysteine 26–cysteine 118, cysteine 28–cysteine 44, cysteine 43–cysteine 99, cysteine 50–cysteine 92, cysteine 60–cysteine 85, and cysteine 79–cysteine 90. Ca(2+) is bound by residues tyrosine 27, glycine 29, and glycine 31. The active site involves histidine 47. Aspartate 48 contributes to the Ca(2+) binding site. Residue aspartate 93 is part of the active site.

It belongs to the phospholipase A2 family. Group I subfamily. D49 sub-subfamily. The cofactor is Ca(2+). In terms of tissue distribution, expressed by the venom gland.

It localises to the secreted. It catalyses the reaction a 1,2-diacyl-sn-glycero-3-phosphocholine + H2O = a 1-acyl-sn-glycero-3-phosphocholine + a fatty acid + H(+). In terms of biological role, PLA2 catalyzes the calcium-dependent hydrolysis of the 2-acyl groups in 3-sn-phosphoglycerides. This chain is Acidic phospholipase A2 DE-II, found in Naja melanoleuca (Forest cobra).